Reading from the N-terminus, the 556-residue chain is 2-succinyl-5-enolpyruvyl-6-hydroxy-3-cyclohexene-1-carboxylate synthase (556 aa).

The protein belongs to the TPP enzyme family. MenD subfamily. Homodimer. Mg(2+) serves as cofactor. Requires Mn(2+) as cofactor. Thiamine diphosphate is required as a cofactor.

It catalyses the reaction isochorismate + 2-oxoglutarate + H(+) = 5-enolpyruvoyl-6-hydroxy-2-succinyl-cyclohex-3-ene-1-carboxylate + CO2. It participates in quinol/quinone metabolism; 1,4-dihydroxy-2-naphthoate biosynthesis; 1,4-dihydroxy-2-naphthoate from chorismate: step 2/7. Its pathway is quinol/quinone metabolism; menaquinone biosynthesis. Its function is as follows. Catalyzes the thiamine diphosphate-dependent decarboxylation of 2-oxoglutarate and the subsequent addition of the resulting succinic semialdehyde-thiamine pyrophosphate anion to isochorismate to yield 2-succinyl-5-enolpyruvyl-6-hydroxy-3-cyclohexene-1-carboxylate (SEPHCHC). In Escherichia coli O157:H7, this protein is 2-succinyl-5-enolpyruvyl-6-hydroxy-3-cyclohexene-1-carboxylate synthase.